The primary structure comprises 476 residues: Cytosolic iron-sulfur assembly component 3 (476 aa).

Alanine 2 is subject to N-acetylalanine. Residues cysteine 24, cysteine 71, cysteine 74, cysteine 77, cysteine 190, cysteine 246, cysteine 395, and cysteine 399 each contribute to the [4Fe-4S] cluster site.

The protein belongs to the NARF family. As to quaternary structure, external component of the CIA complex. In the CIA complex, interacts directly with CIAO1 and MMS19.

In terms of biological role, component of the cytosolic iron-sulfur protein assembly (CIA) complex, a multiprotein complex that mediates the incorporation of iron-sulfur cluster into extramitochondrial Fe/S proteins. Seems to negatively regulate the level of HIF1A expression, although this effect could be indirect. The sequence is that of Cytosolic iron-sulfur assembly component 3 from Bos taurus (Bovine).